The primary structure comprises 201 residues: Holliday junction branch migration complex subunit RuvA (201 aa).

The domain I stretch occupies residues 1–63; it reads MYDYIKGTVT…EDNISLFGFQ (63 aa). Residues 64–142 form a domain II region; it reads TTEERYLFKK…DVVASEIVYV (79 aa). Residues 143-153 form a flexible linker region; the sequence is APENDMVAGLS. Positions 153 to 201 are domain III; it reads SPQLEEAVLALEALGYSTRELKKVIPKLAKEEDLTSDAYIKLALQLMTK.

This sequence belongs to the RuvA family. As to quaternary structure, homotetramer. Forms an RuvA(8)-RuvB(12)-Holliday junction (HJ) complex. HJ DNA is sandwiched between 2 RuvA tetramers; dsDNA enters through RuvA and exits via RuvB. An RuvB hexamer assembles on each DNA strand where it exits the tetramer. Each RuvB hexamer is contacted by two RuvA subunits (via domain III) on 2 adjacent RuvB subunits; this complex drives branch migration. In the full resolvosome a probable DNA-RuvA(4)-RuvB(12)-RuvC(2) complex forms which resolves the HJ.

Its subcellular location is the cytoplasm. Functionally, the RuvA-RuvB-RuvC complex processes Holliday junction (HJ) DNA during genetic recombination and DNA repair, while the RuvA-RuvB complex plays an important role in the rescue of blocked DNA replication forks via replication fork reversal (RFR). RuvA specifically binds to HJ cruciform DNA, conferring on it an open structure. The RuvB hexamer acts as an ATP-dependent pump, pulling dsDNA into and through the RuvAB complex. HJ branch migration allows RuvC to scan DNA until it finds its consensus sequence, where it cleaves and resolves the cruciform DNA. The protein is Holliday junction branch migration complex subunit RuvA of Listeria monocytogenes serotype 4a (strain HCC23).